A 522-amino-acid chain; its full sequence is Maturase K (522 aa).

Belongs to the intron maturase 2 family. MatK subfamily.

Its subcellular location is the plastid. It is found in the chloroplast. Its function is as follows. Usually encoded in the trnK tRNA gene intron. Probably assists in splicing its own and other chloroplast group II introns. This chain is Maturase K, found in Gladiolus papilio (Goldblotch gladiolus).